A 701-amino-acid polypeptide reads, in one-letter code: Elongation factor G (701 aa).

Residues Gly-8–Thr-291 form the tr-type G domain. GTP is bound by residues Ala-17–Thr-24, Asp-89–His-93, and Asn-143–Asp-146.

The protein belongs to the TRAFAC class translation factor GTPase superfamily. Classic translation factor GTPase family. EF-G/EF-2 subfamily.

It localises to the cytoplasm. Functionally, catalyzes the GTP-dependent ribosomal translocation step during translation elongation. During this step, the ribosome changes from the pre-translocational (PRE) to the post-translocational (POST) state as the newly formed A-site-bound peptidyl-tRNA and P-site-bound deacylated tRNA move to the P and E sites, respectively. Catalyzes the coordinated movement of the two tRNA molecules, the mRNA and conformational changes in the ribosome. This Pseudomonas savastanoi pv. phaseolicola (strain 1448A / Race 6) (Pseudomonas syringae pv. phaseolicola (strain 1448A / Race 6)) protein is Elongation factor G.